The chain runs to 972 residues: Microtubule-associated protein 1S (972 aa).

Residues 1–715 (MAAVMAAPEP…SESLPTLSDS (715 aa)) are necessary for the microtubule-organizing center localization. Over residues 454 to 469 (LEVPSRANSQDSLASR) the composition is skewed to polar residues. The tract at residues 454–632 (LEVPSRANSQ…PHSTEVDESL (179 aa)) is disordered. Residue Ser-462 is modified to Phosphoserine. The span at 489 to 505 (VRREPALATRDQKKDTK) shows a compositional bias: basic and acidic residues. Composition is skewed to pro residues over residues 537–550 (APVPAAPPAAPAPE) and 564–581 (PPAPSPTLSPAQSPPPTA). Residues Ser-585, Ser-590, and Ser-592 each carry the phosphoserine modification. Residues 600-972 (PDASPSATTP…EAFPACKVEF (373 aa)) form a necessary for interaction with RASSF1 region. The segment covering 602–620 (ASPSATTPTLTTPSLPAEL) has biased composition (low complexity). The interval 644–879 (DAGLSLPLRL…GGGAGHLDQN (236 aa)) is necessary for association with microtubules. Phosphoserine occurs at positions 659 and 683. The tract at residues 671 to 854 (CEFSHRKPPP…SSGPSSRPAP (184 aa)) is disordered. The segment covering 702–721 (PTSVSESLPTLSDSDPVPVA) has biased composition (low complexity). Residue Ser-723 is modified to Phosphoserine. The segment covering 737-748 (LPTPRVPPPLPD) has biased composition (pro residues). The segment covering 781–800 (ARPSSASAAPRAATVAAKTK) has biased composition (low complexity). Residues 874–972 (GHLDQNFFLR…EAFPACKVEF (99 aa)) form a necessary for association with actin region. Positions 880 to 904 (FFLRVRALCYVISGQGQRQEEGLRG) are necessary for the mitochondrial aggregation and genome destruction.

This sequence belongs to the MAP1A/MAP1B/MAP1S family. Heterodimer of a heavy and a light chain. Interacts with microtubules and actin. Both MAP1S heavy and light chains interact with microtubules. MAP1S light chain interacts with actin. Interacts with LRPPRC, RASSF1, microtubules and VCY2. Interacts (via C-terminus) with GAN (via Kelch domains). Interacts with WDR47 (via N-terminus of light chain). Interacts with ESR1. In terms of tissue distribution, expressed in cortex cerebellum, dorsal root ganglia, frontal cortex, hippocampus, hypothalamus, mesencephalon, medulla oblongata, occipital cortex, pons, spinal cord, striatum of the brain, neurons, heart, testis and skeletal muscle (at protein level).

The protein localises to the nucleus. Its subcellular location is the cytoplasm. It is found in the cytosol. It localises to the cytoskeleton. The protein resides in the spindle. Microtubule-associated protein that mediates aggregation of mitochondria resulting in cell death and genomic destruction (MAGD). Plays a role in anchoring the microtubule organizing center to the centrosomes. Binds to DNA. Plays a role in apoptosis. Involved in the formation of microtubule bundles. In Rattus norvegicus (Rat), this protein is Microtubule-associated protein 1S (Map1s).